The chain runs to 1340 residues: Early transcription factor large subunit homolog (1340 aa).

Its subcellular location is the virion. Its function is as follows. Putative initation factor. This is Early transcription factor large subunit homolog from Ornithodoros (relapsing fever ticks).